Here is a 289-residue protein sequence, read N- to C-terminus: Ribosomal RNA small subunit methyltransferase A (289 aa).

Residues N21, L23, G48, E69, D94, and N120 each contribute to the S-adenosyl-L-methionine site.

Belongs to the class I-like SAM-binding methyltransferase superfamily. rRNA adenine N(6)-methyltransferase family. RsmA subfamily.

The protein localises to the cytoplasm. It catalyses the reaction adenosine(1518)/adenosine(1519) in 16S rRNA + 4 S-adenosyl-L-methionine = N(6)-dimethyladenosine(1518)/N(6)-dimethyladenosine(1519) in 16S rRNA + 4 S-adenosyl-L-homocysteine + 4 H(+). Its function is as follows. Specifically dimethylates two adjacent adenosines (A1518 and A1519) in the loop of a conserved hairpin near the 3'-end of 16S rRNA in the 30S particle. May play a critical role in biogenesis of 30S subunits. This chain is Ribosomal RNA small subunit methyltransferase A, found in Haemophilus ducreyi (strain 35000HP / ATCC 700724).